We begin with the raw amino-acid sequence, 185 residues long: Ribosome-recycling factor (185 aa).

The tract at residues Arg-143–Ser-163 is disordered.

Belongs to the RRF family.

Its subcellular location is the cytoplasm. Responsible for the release of ribosomes from messenger RNA at the termination of protein biosynthesis. May increase the efficiency of translation by recycling ribosomes from one round of translation to another. This is Ribosome-recycling factor from Mycobacterium marinum (strain ATCC BAA-535 / M).